The primary structure comprises 2493 residues: Adenylate cyclase (2493 aa).

5 stretches are compositionally biased toward polar residues: residues 1–18 (MLFT…SPEQ), 42–51 (RDSNGSSNFT), 60–78 (SQQY…QPDI), 129–147 (PANS…SISP), and 197–210 (APFS…TSVN). Disordered stretches follow at residues 1 to 85 (MLFT…SSTL), 99 to 148 (FEHA…ISPS), 197 to 325 (APFS…SSLS), 355 to 444 (NSPS…QSQS), 475 to 565 (GSIT…VNML), 616 to 660 (QAPV…KTSY), 753 to 832 (NVGE…GSKS), 854 to 882 (ALVQ…GAGA), and 904 to 967 (RPSK…ATGT). Positions 211 to 233 (PSAASTASPSTSAATRTRPRGGT) are enriched in low complexity. Polar residues-rich tracts occupy residues 234-246 (NASQ…TSFG) and 253-264 (LSSSRSQYSLRP). 2 stretches are compositionally biased toward basic residues: residues 287–303 (AVKK…KKSS) and 404–422 (HLKK…HLAK). Residues 425–434 (KPGEDADSAR) show a composition bias toward basic and acidic residues. The segment covering 500-525 (PSPSQTPIAERQTSVTSTVESPSHAS) has biased composition (polar residues). The span at 534–555 (SLRTPSRTTASTSTSSASTVLS) shows a compositional bias: low complexity. The span at 630-640 (TDSELSDRKDS) shows a compositional bias: basic and acidic residues. Positions 641-660 (VVSTHSMRSNHSGISPKTSY) are enriched in polar residues. Positions 754–763 (VGEEEDDDDD) are enriched in acidic residues. 2 stretches are compositionally biased toward low complexity: residues 780–791 (SSSGISSTHASS) and 854–870 (ALVQ…QPSP). The segment covering 913–935 (RPNTAGSVGATRPSTTTLGSTLS) has biased composition (polar residues). A Ras-associating domain is found at 970–1072 (RNHFIRVYKT…LRFVFRPDSV (103 aa)). LRR repeat units lie at residues 1086–1107 (TFQH…LYKH), 1110–1132 (WIVS…VQLC), 1134–1155 (SLRT…VRHS), 1157–1178 (TLTH…SLDL), 1181–1202 (ELMS…FSSI), 1204–1225 (TLRN…ICDV), 1227–1248 (SLVD…IANL), 1250–1271 (NLER…MSEL), 1273–1294 (SLRT…LGLP), 1295–1316 (RLQN…LGPQ), 1317–1336 (LTQV…AALT), 1339–1360 (DLTS…LFPQ), 1363–1385 (ALVK…GDLK), 1386–1407 (RLEM…IGDL), 1409–1430 (ALKE…LWLC), 1432–1453 (SLAH…PDIR), 1511–1534 (SLQK…SELT), 1535–1556 (SLEV…SLQT), 1559–1580 (KLRE…DLVV), 1583–1605 (ELRI…GKLK), 1606–1628 (KLAN…HYDW), and 1635–1654 (ELRY…TKLS). The region spanning 1710 to 2000 (AYGIADALGK…ESIMVMVISV (291 aa)) is the PPM-type phosphatase domain. The region spanning 2058-2194 (ALVFTDIKNS…PMVNRAARIS (137 aa)) is the Guanylate cyclase domain. Positions 2063 and 2105 each coordinate Mg(2+). Disordered stretches follow at residues 2220-2241 (DESS…TEEE), 2354-2378 (EADR…HGTA), and 2467-2493 (PPRA…ELVP). Positions 2470 to 2485 (ASTSALSLPSPRTSPR) are enriched in polar residues.

It belongs to the adenylyl cyclase class-3 family. It depends on Mg(2+) as a cofactor.

The enzyme catalyses ATP = 3',5'-cyclic AMP + diphosphate. In terms of biological role, plays essential roles in regulation of cellular metabolism by catalyzing the synthesis of a second messenger, cAMP. This is Adenylate cyclase (UAC1) from Mycosarcoma maydis (Corn smut fungus).